A 164-amino-acid polypeptide reads, in one-letter code: General odorant-binding protein 1 (164 aa).

The signal sequence occupies residues 1–18 (MWKLVVVLTVNLLQGALT). 3 disulfide bridges follow: Cys37-Cys72, Cys68-Cys126, and Cys115-Cys135.

This sequence belongs to the PBP/GOBP family. Homodimer. Antenna.

Present in the aqueous fluid surrounding olfactory sensory dendrites and are thought to aid in the capture and transport of hydrophobic odorants into and through this fluid. The protein is General odorant-binding protein 1 of Bombyx mori (Silk moth).